Consider the following 129-residue polypeptide: UPF0344 protein SAR0931 (129 aa).

The next 4 helical transmembrane spans lie at 1-21 (MLHLHILSWVLAIILFIATYL), 36-56 (LHMVLRLFMLLTLISGFWILI), 67-87 (MLLTLKMLCGVAVVGLMEVSI), and 99-119 (MFWITIALIIITMVLGVILPL).

Belongs to the UPF0344 family.

It localises to the cell membrane. The chain is UPF0344 protein SAR0931 from Staphylococcus aureus (strain MRSA252).